Here is a 158-residue protein sequence, read N- to C-terminus: MQGRLSAWLVKHGLIHRSLGFDYQGIETLQIKPEDWHSIAVIFYVYGYNYLRSQCAYDVAPGGLLASVYHLTRIEDDVDQPEELCIKVFASRRNPRIPSVFWVWKSVDFQERESYDMLGISYDNHPRLKRILMPESWIGWPLRKDYIAPNFYEIQDAH.

It belongs to the complex I 30 kDa subunit family. In terms of assembly, NDH is composed of at least 16 different subunits, 5 of which are encoded in the nucleus.

The protein resides in the plastid. Its subcellular location is the chloroplast thylakoid membrane. It carries out the reaction a plastoquinone + NADH + (n+1) H(+)(in) = a plastoquinol + NAD(+) + n H(+)(out). It catalyses the reaction a plastoquinone + NADPH + (n+1) H(+)(in) = a plastoquinol + NADP(+) + n H(+)(out). Functionally, NDH shuttles electrons from NAD(P)H:plastoquinone, via FMN and iron-sulfur (Fe-S) centers, to quinones in the photosynthetic chain and possibly in a chloroplast respiratory chain. The immediate electron acceptor for the enzyme in this species is believed to be plastoquinone. Couples the redox reaction to proton translocation, and thus conserves the redox energy in a proton gradient. This is NAD(P)H-quinone oxidoreductase subunit J, chloroplastic from Solanum tuberosum (Potato).